A 547-amino-acid chain; its full sequence is TBCC domain-containing protein 1 (547 aa).

The C-CAP/cofactor C-like domain occupies 304-435; it reads PHTHRMVVMS…LEDHMAQTGL (132 aa).

The protein belongs to the TBCC family.

It localises to the cytoplasm. It is found in the cytoskeleton. The protein localises to the microtubule organizing center. The protein resides in the centrosome. Its subcellular location is the spindle pole. Functionally, may play a role in the regulation of centrosome and Golgi apparatus positioning. The chain is TBCC domain-containing protein 1 (tbccd1) from Xenopus laevis (African clawed frog).